Consider the following 563-residue polypeptide: Kelch repeat and BTB domain-containing protein 1 (563 aa).

In terms of domain architecture, BTB spans 21 to 88 (CDINIVINDE…IYGIPLSLTN (68 aa)). Residues 123–219 (CIDFYIYADK…SLLSPQVIKS (97 aa)) form the BACK domain. 6 Kelch repeats span residues 252–297 (IELI…VLDN), 298–346 (IIYM…ADDE), 347–395 (YIYC…MLNG), 397–441 (IYVI…VHAG), 442–492 (KIYI…SAHN), and 494–538 (LYVG…CEPI).

Interacts (via BTB domain) with host CUL3.

Its subcellular location is the host cytoplasm. Functionally, probable substrate-specific adapter of CUL3-containing E3 ubiquitin-protein ligases which mediate the ubiquitination and subsequent proteasomal degradation of host target proteins. This is Kelch repeat and BTB domain-containing protein 1 (KBTB1) from Cowpox virus (strain Brighton Red) (CPV).